The primary structure comprises 235 residues: uncharacterized protein (235 aa).

A run of 2 helical transmembrane segments spans residues 167–187 (AFKLAILVTPFVETLSWLNEL) and 190–210 (LFAYCPAELSLSLFFLCLLLW).

Its subcellular location is the membrane. This is an uncharacterized protein from Saccharomyces cerevisiae (strain ATCC 204508 / S288c) (Baker's yeast).